Consider the following 405-residue polypeptide: Putative phosphate permease PYRAB14010 (405 aa).

11 helical membrane-spanning segments follow: residues 3-23 (MDPW…AIGA), 44-64 (AVLI…KTVT), 82-102 (VLVY…VIAT), 114-134 (IIGG…VNWG), 138-158 (SVVL…FFIF), 181-201 (VWIG…VLHG), 207-227 (GVLK…SMIL), 264-284 (VANA…GMAG), 287-307 (VPVP…GVAT), 329-349 (FTID…GMPI), and 384-404 (FVTV…LWIV).

Belongs to the inorganic phosphate transporter (PiT) (TC 2.A.20) family.

The protein localises to the cell membrane. Its function is as follows. Potential transporter for phosphate. This Pyrococcus abyssi (strain GE5 / Orsay) protein is Putative phosphate permease PYRAB14010.